Here is a 207-residue protein sequence, read N- to C-terminus: 2,3-bisphosphoglycerate-dependent phosphoglycerate mutase (207 aa).

Substrate is bound by residues Arg-10–Asn-17, Thr-23–Gly-24, Arg-62, Glu-89–Tyr-92, Lys-100, Arg-116–Arg-117, and Gly-160–Asn-161. His-11 acts as the Tele-phosphohistidine intermediate in catalysis. Glu-89 acts as the Proton donor/acceptor in catalysis.

This sequence belongs to the phosphoglycerate mutase family. BPG-dependent PGAM subfamily. Homodimer.

The enzyme catalyses (2R)-2-phosphoglycerate = (2R)-3-phosphoglycerate. It functions in the pathway carbohydrate degradation; glycolysis; pyruvate from D-glyceraldehyde 3-phosphate: step 3/5. In terms of biological role, catalyzes the interconversion of 2-phosphoglycerate and 3-phosphoglycerate. The protein is 2,3-bisphosphoglycerate-dependent phosphoglycerate mutase of Afipia carboxidovorans (strain ATCC 49405 / DSM 1227 / KCTC 32145 / OM5) (Oligotropha carboxidovorans).